Reading from the N-terminus, the 150-residue chain is Snaclec 7 (150 aa).

A signal peptide spans 1-23 (MGRFISISFGLLVVFLSLSGTGA). 3 disulfide bridges follow: Cys-27–Cys-38, Cys-55–Cys-144, and Cys-121–Cys-136. Residues 34–145 (YEGYCYKVFN…CNDPRYFVCK (112 aa)) enclose the C-type lectin domain.

Belongs to the snaclec family. Heterodimer; disulfide-linked.

It localises to the secreted. Interferes with one step of hemostasis (modulation of platelet aggregation, or coagulation cascade, for example). The protein is Snaclec 7 of Daboia siamensis (Eastern Russel's viper).